Here is a 416-residue protein sequence, read N- to C-terminus: Multifunctional CCA protein (416 aa).

ATP is bound by residues G8 and R11. CTP contacts are provided by G8 and R11. Mg(2+) is bound by residues D21 and D23. Residues R91, R137, and R140 each contribute to the ATP site. CTP-binding residues include R91, R137, and R140. The 102-residue stretch at 228-329 folds into the HD domain; the sequence is TGVHTLMVLA…VKIFDKADFW (102 aa).

The protein belongs to the tRNA nucleotidyltransferase/poly(A) polymerase family. Bacterial CCA-adding enzyme type 1 subfamily. Monomer. Can also form homodimers and oligomers. Mg(2+) serves as cofactor. It depends on Ni(2+) as a cofactor.

It catalyses the reaction a tRNA precursor + 2 CTP + ATP = a tRNA with a 3' CCA end + 3 diphosphate. It carries out the reaction a tRNA with a 3' CCA end + 2 CTP + ATP = a tRNA with a 3' CCACCA end + 3 diphosphate. Catalyzes the addition and repair of the essential 3'-terminal CCA sequence in tRNAs without using a nucleic acid template. Adds these three nucleotides in the order of C, C, and A to the tRNA nucleotide-73, using CTP and ATP as substrates and producing inorganic pyrophosphate. tRNA 3'-terminal CCA addition is required both for tRNA processing and repair. Also involved in tRNA surveillance by mediating tandem CCA addition to generate a CCACCA at the 3' terminus of unstable tRNAs. While stable tRNAs receive only 3'-terminal CCA, unstable tRNAs are marked with CCACCA and rapidly degraded. The protein is Multifunctional CCA protein of Shewanella baltica (strain OS223).